The sequence spans 513 residues: MSLNPALKFRDFIQVLKNEGDLIEIDTEVDPNLEVGAITRKAYENKLAAPLFNNLKQDPENIDPKNLFRILGCPGGLRGFGNDHARIALHLGLDSQTPMKEIIDFLVANRNPKKYIPPVLVPNDQSPHKKHHLTKEQIDLTKLPVPLLHHGDGGKFIQTYGMWVLQTPDKSWTNWSIARGMVHDSKSITGLVINPQHVKQVSDAWVAAGKGDKIPFALCFGVPPAAILVSSMPIPDGATEAEYIGGLCNQAVPVVKCETNDLEVPADCEMVFEGYLDRDTLVREGPFGEMHGYCFPKDHHTQPLYRVNHISYRDQAIMPISNPGLCTDETHTLIGGLVSAETKYLISQHPVLSKIVEDVFTPYEAQALWLAVKINTHELVKLKTNAKELSNLVGDFLFRSKECYKVCSILHEIILVGDDIDIFDFKQLIWAYTTRHTPVQDQLYFDDVKPFALAPFASQGPLIKTRQGGKCVTTCIFPKQFTDPDFEFVTCNFNGYPEEVKNKISQNWDKYYK.

The Mn(2+) site is built by Asn-174, His-197, and Glu-240. Prenylated FMN is bound by residues 174-179 (NWSIAR), 196-197 (QH), and Glu-240. Glu-289 (proton donor) is an active-site residue. Lys-405 serves as a coordination point for prenylated FMN.

Belongs to the UbiD family. UbiD-like/FDC subfamily. In terms of assembly, homodimer. May form higher order oligomers. Requires Mn(2+) as cofactor. It depends on prenylated FMN as a cofactor.

It is found in the cytoplasm. It catalyses the reaction (E)-4-coumarate + H(+) = 4-vinylphenol + CO2. The enzyme catalyses (E)-cinnamate + H(+) = styrene + CO2. The catalysed reaction is (E)-ferulate + H(+) = 2-methoxy-4-vinylphenol + CO2. Functionally, catalyzes the reversible decarboxylation of aromatic carboxylic acids like ferulic acid, p-coumaric acid or cinnamic acid, producing the corresponding vinyl derivatives 4-vinylphenol, 4-vinylguaiacol, and styrene, respectively, which play the role of aroma metabolites. The protein is Ferulic acid decarboxylase 1 of Candida dubliniensis (strain CD36 / ATCC MYA-646 / CBS 7987 / NCPF 3949 / NRRL Y-17841) (Yeast).